We begin with the raw amino-acid sequence, 264 residues long: Myozenin-2 (264 aa).

Position 53 is an omega-N-methylarginine (Arg53). Residues 90–135 are disordered; sequence GKVDGSNLEGGSQQAPLTPPNTPDPRSPPNPDNIAPGYSGPLKEIP. A Phosphoserine modification is found at Ser101. The segment covering 106–120 has biased composition (pro residues); sequence LTPPNTPDPRSPPNP. Residues Thr107 and Thr111 each carry the phosphothreonine modification. Ser116 bears the Phosphoserine mark.

It belongs to the myozenin family. As to quaternary structure, interacts via its C-terminus with spectrin repeats 3 and 4 of ACTN2. Interacts with ACTN1, LDB3, MYOT and PPP3CA.

The protein localises to the cytoplasm. It localises to the myofibril. Its subcellular location is the sarcomere. It is found in the z line. In terms of biological role, myozenins may serve as intracellular binding proteins involved in linking Z line proteins such as alpha-actinin, gamma-filamin, TCAP/telethonin, LDB3/ZASP and localizing calcineurin signaling to the sarcomere. Plays an important role in the modulation of calcineurin signaling. May play a role in myofibrillogenesis. The protein is Myozenin-2 (MYOZ2) of Pongo abelii (Sumatran orangutan).